Reading from the N-terminus, the 644-residue chain is DNA gyrase subunit B (644 aa).

Residues 429–543 (CEIFLVEGDS…AGYVYIAQPP (115 aa)) form the Toprim domain. Mg(2+) is bound by residues E435, D508, and D510.

Belongs to the type II topoisomerase GyrB family. Heterotetramer, composed of two GyrA and two GyrB chains. In the heterotetramer, GyrA contains the active site tyrosine that forms a transient covalent intermediate with DNA, while GyrB binds cofactors and catalyzes ATP hydrolysis. Requires Mg(2+) as cofactor. The cofactor is Mn(2+). Ca(2+) serves as cofactor.

It is found in the cytoplasm. It catalyses the reaction ATP-dependent breakage, passage and rejoining of double-stranded DNA.. Functionally, a type II topoisomerase that negatively supercoils closed circular double-stranded (ds) DNA in an ATP-dependent manner to modulate DNA topology and maintain chromosomes in an underwound state. Negative supercoiling favors strand separation, and DNA replication, transcription, recombination and repair, all of which involve strand separation. Also able to catalyze the interconversion of other topological isomers of dsDNA rings, including catenanes and knotted rings. Type II topoisomerases break and join 2 DNA strands simultaneously in an ATP-dependent manner. In Staphylococcus aureus (strain COL), this protein is DNA gyrase subunit B.